Reading from the N-terminus, the 128-residue chain is Large ribosomal subunit protein mL55 (128 aa).

A mitochondrion-targeting transit peptide spans 1-33; that stretch reads MAAVGSLLGRLRQSTVKATGPALRRLHTSSWRA. A Phosphoserine modification is found at Ser85.

It belongs to the mitochondrion-specific ribosomal protein mL55 family. Component of the mitochondrial large ribosomal subunit (mt-LSU). Mature mammalian 55S mitochondrial ribosomes consist of a small (28S) and a large (39S) subunit. The 28S small subunit contains a 12S ribosomal RNA (12S mt-rRNA) and 30 different proteins. The 39S large subunit contains a 16S rRNA (16S mt-rRNA), a copy of mitochondrial valine transfer RNA (mt-tRNA(Val)), which plays an integral structural role, and 52 different proteins.

The protein localises to the mitochondrion. The polypeptide is Large ribosomal subunit protein mL55 (MRPL55) (Homo sapiens (Human)).